A 447-amino-acid chain; its full sequence is Glyceraldehyde-3-phosphate dehydrogenase GAPB, chloroplastic (447 aa).

Residues 1-80 (MATHAALAVS…STPVRGETVA (80 aa)) constitute a chloroplast transit peptide. NADP(+)-binding positions include 91-92 (RI), aspartate 115, and arginine 160. Residues 234–236 (SCT), threonine 265, arginine 280, 293–294 (TG), and arginine 316 each bind D-glyceraldehyde 3-phosphate. Catalysis depends on cysteine 235, which acts as the Nucleophile. An NADP(+)-binding site is contributed by asparagine 399.

The protein belongs to the glyceraldehyde-3-phosphate dehydrogenase family. Tetramer of either four A chains (GAPDH 2) or two A and two B chains (GAPDH 1). Expressed in leaves and stems.

The protein localises to the plastid. It localises to the chloroplast membrane. It is found in the chloroplast stroma. The catalysed reaction is D-glyceraldehyde 3-phosphate + phosphate + NADP(+) = (2R)-3-phospho-glyceroyl phosphate + NADPH + H(+). It functions in the pathway carbohydrate biosynthesis; Calvin cycle. In terms of biological role, involved in the photosynthetic reductive pentose phosphate pathway (Calvin-Benson cycle). Catalyzes the reduction of 1,3-diphosphoglycerate by NADPH. The chain is Glyceraldehyde-3-phosphate dehydrogenase GAPB, chloroplastic (GAPB) from Arabidopsis thaliana (Mouse-ear cress).